Consider the following 132-residue polypeptide: Large-conductance mechanosensitive channel (132 aa).

A run of 3 helical transmembrane segments spans residues 14–34 (VLDM…VDSL), 39–59 (INPI…AVTI), and 68–88 (IGNF…VFLI).

Belongs to the MscL family. Homopentamer.

It localises to the cell membrane. In terms of biological role, channel that opens in response to stretch forces in the membrane lipid bilayer. May participate in the regulation of osmotic pressure changes within the cell. The chain is Large-conductance mechanosensitive channel from Latilactobacillus sakei subsp. sakei (strain 23K) (Lactobacillus sakei subsp. sakei).